The following is a 365-amino-acid chain: Guanine nucleotide-binding protein alpha-6 subunit (365 aa).

Residue Gly-2 is the site of N-myristoyl glycine attachment. Residues 42 to 364 (NRFKILLLGT…NENLRSAGLH (323 aa)) form the G-alpha domain. A G1 motif region spans residues 45–58 (KILLLGTAESGKST). Residues 50–57 (GTAESGKS), 187–193 (VHCRIST), 212–216 (DVGGQ), 281–284 (NKYD), and Ala-336 contribute to the GTP site. Mg(2+)-binding residues include Ser-57 and Thr-193. The segment at 185–193 (DIVHCRIST) is G2 motif. A G3 motif region spans residues 208 to 217 (FKMVDVGGQR). A G4 motif region spans residues 277 to 284 (VLFLNKYD). A G5 motif region spans residues 334–339 (TTATDT).

This sequence belongs to the G-alpha family. In terms of assembly, g proteins are composed of 3 units; alpha, beta and gamma. The alpha chain contains the guanine nucleotide binding site.

In terms of biological role, guanine nucleotide-binding proteins (G proteins) are involved as modulators or transducers in various transmembrane signaling systems. In Caenorhabditis briggsae, this protein is Guanine nucleotide-binding protein alpha-6 subunit (gpa-6).